A 116-amino-acid chain; its full sequence is Large ribosomal subunit protein bL17 (116 aa).

Belongs to the bacterial ribosomal protein bL17 family. In terms of assembly, part of the 50S ribosomal subunit. Contacts protein L32.

The protein is Large ribosomal subunit protein bL17 of Nostoc punctiforme (strain ATCC 29133 / PCC 73102).